The chain runs to 362 residues: DLA class I histocompatibility antigen, A9/A9 alpha chain (362 aa).

An N-terminal signal peptide occupies residues 1 to 24 (MEVVMPRALLVLLSAALALTPTRA). The segment at 25–114 (GSHSLRYFYT…LRGYYNQSEA (90 aa)) is alpha-1. The Extracellular segment spans residues 25–306 (GSHSLRYFYT…RRWEPSPLST (282 aa)). An N-linked (GlcNAc...) asparagine glycan is attached at Asn-110. Residues 115–207 (GSHTRQTMYG…EMGKETLLRA (93 aa)) are alpha-2. 2 disulfide bridges follow: Cys-125–Cys-189 and Cys-228–Cys-284. Positions 208–299 (DPPSTRVTHH…GLPEPITRRW (92 aa)) are alpha-3. The Ig-like C1-type domain maps to 210–296 (PSTRVTHHPV…QHEGLPEPIT (87 aa)). The interval 300–306 (EPSPLST) is connecting peptide. A helical membrane pass occupies residues 307 to 329 (IVIVSIAALVLLVVAGVIGAVIW). Over 330–362 (RKQRSGGKGPGYSHAARDDSAQGSDVSLTAPRV) the chain is Cytoplasmic. The segment at 333 to 362 (RSGGKGPGYSHAARDDSAQGSDVSLTAPRV) is disordered.

This sequence belongs to the MHC class I family. Heterodimer of an alpha chain and a beta chain (beta-2-microglobulin).

It is found in the membrane. Functionally, involved in the presentation of foreign antigens to the immune system. This Canis lupus familiaris (Dog) protein is DLA class I histocompatibility antigen, A9/A9 alpha chain.